A 444-amino-acid chain; its full sequence is UDP-N-acetylmuramoylalanine--D-glutamate ligase (444 aa).

109-115 contacts ATP; it reads GSNGKTT.

The protein belongs to the MurCDEF family.

It is found in the cytoplasm. It carries out the reaction UDP-N-acetyl-alpha-D-muramoyl-L-alanine + D-glutamate + ATP = UDP-N-acetyl-alpha-D-muramoyl-L-alanyl-D-glutamate + ADP + phosphate + H(+). It participates in cell wall biogenesis; peptidoglycan biosynthesis. In terms of biological role, cell wall formation. Catalyzes the addition of glutamate to the nucleotide precursor UDP-N-acetylmuramoyl-L-alanine (UMA). The chain is UDP-N-acetylmuramoylalanine--D-glutamate ligase from Bacteroides thetaiotaomicron (strain ATCC 29148 / DSM 2079 / JCM 5827 / CCUG 10774 / NCTC 10582 / VPI-5482 / E50).